A 107-amino-acid chain; its full sequence is CLAVATA3/ESR (CLE)-related protein 13 (107 aa).

A signal peptide spans 1-25 (MATTRVSHVLGFLLWISLLIFVSIG). Asparagine 29 carries an N-linked (GlcNAc...) asparagine glycan. Positions 79–107 (ALPAGGSEIDPRYGVEKRLVPSGPNPLHH) are disordered. The span at 87–97 (IDPRYGVEKRL) shows a compositional bias: basic and acidic residues. A hydroxyproline mark is found at proline 99 and proline 102. O-linked (Ara...) hydroxyproline glycosylation occurs at proline 102.

This sequence belongs to the CLV3/ESR signal peptide family. The O-glycosylation (arabinosylation) of the hydroxyproline Pro-102 enhances binding affinity of the CLE13p peptide for its receptor. As to expression, mostly expressed in seedlings, roots, flowers, stems and apex, and, to a lower extent, in leaves and siliques.

The protein resides in the secreted. The protein localises to the extracellular space. Its function is as follows. Extracellular signal peptide that regulates cell fate. Represses root apical meristem maintenance. Regulates the transition of protophloem cells from proliferation to differentiation, thus impinging on postembryonic growth capacity of the root meristem; this signaling pathway requires CRN and CLV2. The protein is CLAVATA3/ESR (CLE)-related protein 13 of Arabidopsis thaliana (Mouse-ear cress).